We begin with the raw amino-acid sequence, 534 residues long: MSEVSNEAARRRTFAIISHPDAGKTTLTEKLLLFGGAIQMAGSVKGRKAARHATSDWMALEKERGISVTSSVMQFPYEGKIVNLLDTPGHADFGEDTYRVLTAVDSALMVIDVAKGVEERTIKLMEVCRLRDTPIMTFINKLDREGKNPIDLLDEVETVLGIQCAPVTWPIGMGQRLKGVVHLISGEVHLYEQGRNFTRQDSTIFPSLEAPGLVEKIGEQMLAELREELELVQGASNPFDLDAYRAGQQTPVFFGSGVNNFGVQPLLDFFVEHAPPPQARETTGRRVEPTEAKLSGFVFKIQANMDPQHRDRVAFMRVCSGKFTAGMKTLHVRSGKDVKLANALTFMASDREIAAEAWPGDVIGIHNHGTISIGDTFTEGESLSFTGIPNFAPELFRRARLRDPLKLKQLQKGLAQLSEEGATQFFRPLMSNDLILGAVGVLQFDVVAYRLKDEYGVDAIFEPVSVTTARWVHCDNAKKLEEFREKNAGNLGIDAAGQLVYLAPTRVNLQLAQERAPDVRFSATREHAHVKAID.

Residues 9-278 (ARRRTFAIIS…FFVEHAPPPQ (270 aa)) form the tr-type G domain. GTP-binding positions include 18–25 (SHPDAGKT), 86–90 (DTPGH), and 140–143 (NKLD).

It belongs to the TRAFAC class translation factor GTPase superfamily. Classic translation factor GTPase family. PrfC subfamily.

The protein localises to the cytoplasm. Its function is as follows. Increases the formation of ribosomal termination complexes and stimulates activities of RF-1 and RF-2. It binds guanine nucleotides and has strong preference for UGA stop codons. It may interact directly with the ribosome. The stimulation of RF-1 and RF-2 is significantly reduced by GTP and GDP, but not by GMP. The protein is Peptide chain release factor 3 of Xanthomonas euvesicatoria pv. vesicatoria (strain 85-10) (Xanthomonas campestris pv. vesicatoria).